The following is a 288-amino-acid chain: ATP synthase gamma chain 1 (288 aa).

The protein belongs to the ATPase gamma chain family. F-type ATPases have 2 components, CF(1) - the catalytic core - and CF(0) - the membrane proton channel. CF(1) has five subunits: alpha(3), beta(3), gamma(1), delta(1), epsilon(1). CF(0) has three main subunits: a, b and c.

The protein localises to the cell inner membrane. Functionally, produces ATP from ADP in the presence of a proton gradient across the membrane. The gamma chain is believed to be important in regulating ATPase activity and the flow of protons through the CF(0) complex. The protein is ATP synthase gamma chain 1 of Photobacterium profundum (strain SS9).